Here is a 108-residue protein sequence, read N- to C-terminus: MKFVLLFGVLLVTLFSYSSAEMLDDFDQADEDELLSLIEKEEARAKECTPRFYDCSHDRHSCCRSELFKDVCTCFYPEGGDNEVCTCQQPKHLKYMEKAAGKIKNLFG.

Residues 1-20 (MKFVLLFGVLLVTLFSYSSA) form the signal peptide. Residues 21–44 (EMLDDFDQADEDELLSLIEKEEAR) constitute a propeptide that is removed on maturation. Disulfide bonds link Cys-48–Cys-63, Cys-55–Cys-72, Cys-62–Cys-87, and Cys-74–Cys-85.

Belongs to the neurotoxin 19 (CSTX) family. 01 subfamily. Expressed by the venom gland.

It is found in the secreted. This chain is U3-lycotoxin-Ls1w, found in Lycosa singoriensis (Wolf spider).